Here is a 582-residue protein sequence, read N- to C-terminus: Proline--tRNA ligase (582 aa).

The protein belongs to the class-II aminoacyl-tRNA synthetase family. ProS type 1 subfamily. As to quaternary structure, homodimer.

The protein localises to the cytoplasm. It carries out the reaction tRNA(Pro) + L-proline + ATP = L-prolyl-tRNA(Pro) + AMP + diphosphate. In terms of biological role, catalyzes the attachment of proline to tRNA(Pro) in a two-step reaction: proline is first activated by ATP to form Pro-AMP and then transferred to the acceptor end of tRNA(Pro). As ProRS can inadvertently accommodate and process non-cognate amino acids such as alanine and cysteine, to avoid such errors it has two additional distinct editing activities against alanine. One activity is designated as 'pretransfer' editing and involves the tRNA(Pro)-independent hydrolysis of activated Ala-AMP. The other activity is designated 'posttransfer' editing and involves deacylation of mischarged Ala-tRNA(Pro). The misacylated Cys-tRNA(Pro) is not edited by ProRS. In Mycobacterium avium (strain 104), this protein is Proline--tRNA ligase.